The following is a 154-amino-acid chain: 6,7-dimethyl-8-ribityllumazine synthase (154 aa).

5-amino-6-(D-ribitylamino)uracil-binding positions include Phe22, 56–58 (AFE), and 80–82 (AVI). 85–86 (AT) lines the (2S)-2-hydroxy-3-oxobutyl phosphate pocket. His88 acts as the Proton donor in catalysis. Phe113 contributes to the 5-amino-6-(D-ribitylamino)uracil binding site. Position 127 (Arg127) interacts with (2S)-2-hydroxy-3-oxobutyl phosphate.

Belongs to the DMRL synthase family.

It carries out the reaction (2S)-2-hydroxy-3-oxobutyl phosphate + 5-amino-6-(D-ribitylamino)uracil = 6,7-dimethyl-8-(1-D-ribityl)lumazine + phosphate + 2 H2O + H(+). It participates in cofactor biosynthesis; riboflavin biosynthesis; riboflavin from 2-hydroxy-3-oxobutyl phosphate and 5-amino-6-(D-ribitylamino)uracil: step 1/2. Catalyzes the formation of 6,7-dimethyl-8-ribityllumazine by condensation of 5-amino-6-(D-ribitylamino)uracil with 3,4-dihydroxy-2-butanone 4-phosphate. This is the penultimate step in the biosynthesis of riboflavin. This Agathobacter rectalis (strain ATCC 33656 / DSM 3377 / JCM 17463 / KCTC 5835 / VPI 0990) (Eubacterium rectale) protein is 6,7-dimethyl-8-ribityllumazine synthase.